We begin with the raw amino-acid sequence, 129 residues long: MTTAFDAAHTEGPGFVGIRFCQECNNMLYPKEDKENKILLYACRNCDYKQEADSNCIYVNKIMHEIDELTHIVPDVISDPTLPRTEDHACPKCSHREAVFFQAQTRRAEEEMRLYYVCTNQNCTHRWTE.

Residues cysteine 21, cysteine 24, cysteine 43, cysteine 46, cysteine 90, cysteine 93, cysteine 118, and cysteine 123 each contribute to the Zn(2+) site. Residues 21 to 46 (CQECNNMLYPKEDKENKILLYACRNC) form a C4-type zinc finger. A TFIIS-type zinc finger spans residues 86-128 (EDHACPKCSHREAVFFQAQTRRAEEEMRLYYVCTNQNCTHRWT).

Belongs to the archaeal RpoM/eukaryotic RPA12/RPB9/RPC11 RNA polymerase family. Component of the RNA polymerase II (Pol II) complex consisting of 12 subunits.

It is found in the nucleus. The protein localises to the nucleolus. In terms of biological role, DNA-dependent RNA polymerase catalyzes the transcription of DNA into RNA using the four ribonucleoside triphosphates as substrates. Component of RNA polymerase II which synthesizes mRNA precursors and many functional non-coding RNAs. Pol II is the central component of the basal RNA polymerase II transcription machinery. It is composed of mobile elements that move relative to each other. RPB9 is part of the upper jaw surrounding the central large cleft and thought to grab the incoming DNA template. This is DNA-directed RNA polymerase II subunit RPB9 from Drosophila melanogaster (Fruit fly).